A 477-amino-acid chain; its full sequence is Tripartite motif-containing protein 72 (477 aa).

C14, C17, C29, H31, C34, C37, C53, C56, C86, H89, C97, D100, C105, C108, H114, and H117 together coordinate Zn(2+). The RING-type zinc-finger motif lies at 14–57 (CPLCLQLFDAPVTAECGHSFCRACLSRVAGEPAADGTVNCPCCQ). A B box-type zinc finger spans residues 81-122 (VPQGHCEEHLDPLSIYCEQDRVLVCGVCASLGSHRGHRLLPA). Residues 135-232 (QQKLQLQEAS…EKVLEEVADK (98 aa)) adopt a coiled-coil conformation. S255 is modified (phosphoserine). Residues 271–475 (DFKFQVWRKM…PLLLVGPDGQ (205 aa)) form the B30.2/SPRY domain.

It belongs to the TRIM/RBCC family. As to quaternary structure, homodimer. Homooligomer; disulfide-linked. Oligomerizes on the phospholipid membrane. Interacts with DYSF and CAV3. Post-translationally, disulfide bond formation at Cys-242 occurs in case of membrane damage that cause the entry of the oxidized milieu of the extracellular space, resulting in homooligomerization. As to expression, muscle-specific.

Its subcellular location is the cell membrane. The protein resides in the sarcolemma. The protein localises to the cytoplasmic vesicle membrane. It carries out the reaction S-ubiquitinyl-[E2 ubiquitin-conjugating enzyme]-L-cysteine + [acceptor protein]-L-lysine = [E2 ubiquitin-conjugating enzyme]-L-cysteine + N(6)-ubiquitinyl-[acceptor protein]-L-lysine.. It participates in protein modification; protein ubiquitination. With respect to regulation, specifically binds phosphatidylserine. The binding to phospholipids enhances ubiquitination activity. In terms of biological role, muscle-specific E3 ubiquitin-protein ligase that plays a central role in cell membrane repair by nucleating the assembly of the repair machinery at injury sites. Its ubiquitination activity is mediated by E2 ubiquitin-conjugating enzymes UBE2D1, UBE2D2 and UBE2D3. Acts as a sensor of oxidation: upon membrane damage, entry of extracellular oxidative environment results in disulfide bond formation and homooligomerization at the injury site. This oligomerization acts as a nucleation site for recruitment of TRIM72-containing vesicles to the injury site, leading to membrane patch formation. Probably acts upstream of the Ca(2+)-dependent membrane resealing process. Required for transport of DYSF to sites of cell injury during repair patch formation. Regulates membrane budding and exocytosis. May be involved in the regulation of the mobility of KCNB1-containing endocytic vesicles. The sequence is that of Tripartite motif-containing protein 72 from Oryctolagus cuniculus (Rabbit).